We begin with the raw amino-acid sequence, 335 residues long: Biotin synthase (335 aa).

The Radical SAM core domain occupies 43 to 269; that stretch reads YFGKKVKLNM…INPTKEIRIA (227 aa). The [4Fe-4S] cluster site is built by C61, C65, and C68. Positions 104, 137, 197, and 267 each coordinate [2Fe-2S] cluster.

This sequence belongs to the radical SAM superfamily. Biotin synthase family. In terms of assembly, homodimer. [4Fe-4S] cluster serves as cofactor. It depends on [2Fe-2S] cluster as a cofactor.

It carries out the reaction (4R,5S)-dethiobiotin + (sulfur carrier)-SH + 2 reduced [2Fe-2S]-[ferredoxin] + 2 S-adenosyl-L-methionine = (sulfur carrier)-H + biotin + 2 5'-deoxyadenosine + 2 L-methionine + 2 oxidized [2Fe-2S]-[ferredoxin]. The protein operates within cofactor biosynthesis; biotin biosynthesis; biotin from 7,8-diaminononanoate: step 2/2. Its function is as follows. Catalyzes the conversion of dethiobiotin (DTB) to biotin by the insertion of a sulfur atom into dethiobiotin via a radical-based mechanism. This Staphylococcus aureus (strain USA300) protein is Biotin synthase.